A 156-amino-acid chain; its full sequence is MMVLDKEDGVPMLSVQPKGKQKGCAGCNRKIKDRYLLKALDKYWHEDCLKCACCDCRLGEVGSTLYTKANLILCRRDYLRLFGTTGNCAACSKLIPAFEMVMRARDNVYHLDCFACQLCNQRFCVGDKFFLKNNMILCQVDYEEGHLNGTFESQVQ.

LIM zinc-binding domains lie at 22–84 (KGCA…LFGT) and 86–148 (GNCA…GHLN).

Expressed in the brain and not in the thymus.

It localises to the nucleus. Its function is as follows. May be involved in gene regulation within neural lineage cells potentially by direct DNA binding or by binding to other transcription factors. The chain is Rhombotin-1 (Lmo1) from Mus musculus (Mouse).